A 371-amino-acid chain; its full sequence is Deoxyguanosinetriphosphate triphosphohydrolase-like protein (371 aa).

Residues 62–200 (RITHSIEVAQ…SAISDDIAYN (139 aa)) enclose the HD domain.

The protein belongs to the dGTPase family. Type 2 subfamily.

This is Deoxyguanosinetriphosphate triphosphohydrolase-like protein from Pelagibacter ubique (strain HTCC1062).